The primary structure comprises 94 residues: MTKSELIENLASTNPNVPLKDIENAVKDILEQLSQALENGERIEIRGFGSFSLHFRQSRIGRNPKTGEKVDLSAKYVPHFKAGKELKERVNIYS.

Belongs to the bacterial histone-like protein family. As to quaternary structure, heterodimer of an alpha and a beta chain.

This protein is one of the two subunits of integration host factor, a specific DNA-binding protein that functions in genetic recombination as well as in transcriptional and translational control. This Histophilus somni (strain 129Pt) (Haemophilus somnus) protein is Integration host factor subunit beta.